The primary structure comprises 137 residues: Small ribosomal subunit protein uS12 (137 aa).

Disordered stretches follow at residues 1-21 (MPTI…KSDS) and 33-57 (KVQT…TPKK).

The protein belongs to the universal ribosomal protein uS12 family. As to quaternary structure, part of the 30S ribosomal subunit. Contacts proteins S8 and S17. May interact with IF1 in the 30S initiation complex.

Its function is as follows. With S4 and S5 plays an important role in translational accuracy. In terms of biological role, interacts with and stabilizes bases of the 16S rRNA that are involved in tRNA selection in the A site and with the mRNA backbone. Located at the interface of the 30S and 50S subunits, it traverses the body of the 30S subunit contacting proteins on the other side and probably holding the rRNA structure together. The combined cluster of proteins S8, S12 and S17 appears to hold together the shoulder and platform of the 30S subunit. This Streptococcus pyogenes serotype M1 protein is Small ribosomal subunit protein uS12.